A 231-amino-acid chain; its full sequence is 5'-methylthioadenosine/S-adenosylhomocysteine nucleosidase (231 aa).

Glu-13 acts as the Proton acceptor in catalysis. Substrate is bound by residues Gly-79, Met-154, and 175–176; that span reads ME. Asp-199 serves as the catalytic Proton donor.

This sequence belongs to the PNP/UDP phosphorylase family. MtnN subfamily.

The enzyme catalyses S-adenosyl-L-homocysteine + H2O = S-(5-deoxy-D-ribos-5-yl)-L-homocysteine + adenine. It catalyses the reaction S-methyl-5'-thioadenosine + H2O = 5-(methylsulfanyl)-D-ribose + adenine. The catalysed reaction is 5'-deoxyadenosine + H2O = 5-deoxy-D-ribose + adenine. Its pathway is amino-acid biosynthesis; L-methionine biosynthesis via salvage pathway; S-methyl-5-thio-alpha-D-ribose 1-phosphate from S-methyl-5'-thioadenosine (hydrolase route): step 1/2. Functionally, catalyzes the irreversible cleavage of the glycosidic bond in both 5'-methylthioadenosine (MTA) and S-adenosylhomocysteine (SAH/AdoHcy) to adenine and the corresponding thioribose, 5'-methylthioribose and S-ribosylhomocysteine, respectively. Also cleaves 5'-deoxyadenosine, a toxic by-product of radical S-adenosylmethionine (SAM) enzymes, into 5-deoxyribose and adenine. The sequence is that of 5'-methylthioadenosine/S-adenosylhomocysteine nucleosidase from Marinomonas sp. (strain MWYL1).